The following is a 138-amino-acid chain: Altered inheritance of mitochondria protein 11 (138 aa).

2 helical membrane-spanning segments follow: residues 17 to 34 and 67 to 89; these read ARFY…RLIS and LTYA…CWAL.

This sequence belongs to the AIM11 family.

Its subcellular location is the membrane. The polypeptide is Altered inheritance of mitochondria protein 11 (AIM11) (Saccharomyces cerevisiae (strain JAY291) (Baker's yeast)).